The following is a 530-amino-acid chain: NAD(+) kinase (530 aa).

3 disordered regions span residues Met1 to Asn27, Ile57 to Asn99, and Ser486 to Val530. The span at Trp13 to Asn25 shows a compositional bias: basic and acidic residues. Residues Ser59–Leu75 are compositionally biased toward low complexity. The segment covering Ile88 to Asn99 has biased composition (polar residues). Phosphoserine is present on residues Ser499 and Ser503. The segment covering Ser499–Val508 has biased composition (acidic residues).

Belongs to the NAD kinase family. Homohexamer.

The enzyme catalyses NAD(+) + ATP = ADP + NADP(+) + H(+). In terms of biological role, specifically phosphorylates NAD in the presence of ATP, dATP, or CTP as phosphoryl donors. The sequence is that of NAD(+) kinase (UTR1) from Saccharomyces cerevisiae (strain ATCC 204508 / S288c) (Baker's yeast).